Here is a 363-residue protein sequence, read N- to C-terminus: MTIGLSCNALKYGGGLERYAIDLARGLADAGVRPLVFARSFDSSVPEYQCVEPRRINVSFLPGKCRDAWFSWRLRAARRAAPVDVLIGCNRVDSSDIAICGGTHLGFLDAIGRMPTFSDRRQIALERRQYARARFVVAHSMLMRDELRRFYGLSDDKIRVLFPPVDAARFTPVDAVRRAELRTRFGFADDEVVLLFPSSSHERKGLPLIEAILRDAGPRVVVAVAGRPPERTSERLRYVGYVKDIEDGYRAADFTILASKYEPFGLVGVESVMCGTPVILPSNIGCCDAIAPSAKLVFAPGDAAGLRGMLDEAVRRVRAGAVRVESGAAARAAIQYDPSVARHVAQLLDLAAEAASDRRNGGR.

Belongs to the glycosyltransferase group 1 family. Glycosyltransferase 4 subfamily.

In terms of biological role, probably a transglycosylase. Probably involved in synthesis of the outer membrane receptor for a cellular contact-dependent growth inhibition (CDI) system. The chain is Probable transglycosylase BTH_I0986 from Burkholderia thailandensis (strain ATCC 700388 / DSM 13276 / CCUG 48851 / CIP 106301 / E264).